Here is a 233-residue protein sequence, read N- to C-terminus: MALRSLVTRKNLPSAFKAATGLGQLRGLQTFSLPDLPYDYGALEPAISGEIMQLHHQKHHQTYITNYNKALEQLNDAIEKGDSAAVVKLQSAIKFNGGGHVNHSIFWKNLAPVREGGGELPHGSLGWAIDADFGSLEKLIQLMNAEGAALQGSGWVWLALDKELKKLVVETTANQDPLVTKGPTLVPLLGIDVWEHAYYLQYKNVRPDYLKNIWKVMNWKYASEVYAKECPSS.

A mitochondrion-targeting transit peptide spans 1–27 (MALRSLVTRKNLPSAFKAATGLGQLRG). His-55, His-103, Asp-192, and His-196 together coordinate Mn(2+).

This sequence belongs to the iron/manganese superoxide dismutase family. Homotetramer. Mn(2+) serves as cofactor. As to expression, present in all tissues examined (leaf, petiole, root, latex, callus) with young leaves showing the highest levels in intact plants.

It is found in the mitochondrion matrix. It carries out the reaction 2 superoxide + 2 H(+) = H2O2 + O2. Functionally, destroys superoxide anion radicals which are normally produced within the cells and which are toxic to biological systems. This chain is Superoxide dismutase [Mn], mitochondrial (SODA), found in Hevea brasiliensis (Para rubber tree).